Consider the following 89-residue polypeptide: HssA/B-like protein 10 (89 aa).

This sequence belongs to the hssA/B family.

The chain is HssA/B-like protein 10 (hssl10) from Dictyostelium discoideum (Social amoeba).